The sequence spans 98 residues: Protein translation factor SUI1 homolog (98 aa).

This sequence belongs to the SUI1 family.

In Pyrococcus abyssi (strain GE5 / Orsay), this protein is Protein translation factor SUI1 homolog.